The following is a 102-amino-acid chain: MPEICPICGLPKDLCVCEEIAKEEQKIKVYVTKRRFGKLMTVVDGFDADLIDVKDLAKKLKDICACGGTVKKDSIELQGDHRKKAEEILIKMGFSKDMIDVR.

The protein belongs to the SUI1 family.

In Methanococcus vannielii, this protein is Protein translation factor SUI1 homolog.